The chain runs to 113 residues: MQAKAVARTVRIAPRKARLVIDLIRGKEVGERFAILRHTPKAASPIIEKVLKSAVANAEHNYDMDVNNLVISQAYVDEGPTLKRFRPRAMGRASAINKRTSHITIVVSEKKEG.

It belongs to the universal ribosomal protein uL22 family. In terms of assembly, part of the 50S ribosomal subunit.

Its function is as follows. This protein binds specifically to 23S rRNA; its binding is stimulated by other ribosomal proteins, e.g. L4, L17, and L20. It is important during the early stages of 50S assembly. It makes multiple contacts with different domains of the 23S rRNA in the assembled 50S subunit and ribosome. In terms of biological role, the globular domain of the protein is located near the polypeptide exit tunnel on the outside of the subunit, while an extended beta-hairpin is found that lines the wall of the exit tunnel in the center of the 70S ribosome. The polypeptide is Large ribosomal subunit protein uL22 (Geobacillus stearothermophilus (Bacillus stearothermophilus)).